A 723-amino-acid polypeptide reads, in one-letter code: Transmembrane channel-like protein 7 (723 aa).

Positions 1–21 are disordered; that stretch reads MSESSASALQLGRPSRQPAVH. Residues 1-168 are Extracellular-facing; that stretch reads MSESSASALQ…GIQSYFSFLR (168 aa). N24 carries an N-linked (GlcNAc...) asparagine glycan. The segment at 51-70 is disordered; the sequence is RRRTTVHSRDKQSGTLLKST. N84 carries N-linked (GlcNAc...) asparagine glycosylation. Position 89 is a phosphoserine (S89). N-linked (GlcNAc...) asparagine glycosylation is present at N96. Residues 169-189 form a helical membrane-spanning segment; it reads FLVLLNLVIFLIIFMLVLLPI. Over 190-219 the chain is Cytoplasmic; it reads LLTKYKITNSSFVLIPFKDTDIQCTVYPVS. A helical membrane pass occupies residues 220–240; the sequence is SSGLIYFYSYIIDLLSGTGFL. The Extracellular segment spans residues 241–263; that stretch reads EETSLFYGHYTIDGVKFQNFTYD. N-linked (GlcNAc...) asparagine glycosylation occurs at N259. The helical transmembrane segment at 264 to 284 threads the bilayer; that stretch reads LPLAYLISTIAYLALSLLWIV. The Cytoplasmic segment spans residues 285-362; sequence KRSVEGFKIN…EETIRIYSLR (78 aa). Residues 363-383 form a helical membrane-spanning segment; that stretch reads LFLNCIVLAVLGACFYAIYVA. Residues 384–404 are Extracellular-facing; it reads TVFSQEHMKKEIDKMVFGENL. Residues 405 to 425 traverse the membrane as a helical segment; that stretch reads LILYLPSIVITLANFITPMIF. At 426–494 the chain is on the cytoplasmic side; it reads AKIIRYEDYS…PCWETQVGQE (69 aa). The helical transmembrane segment at 495 to 515 threads the bilayer; the sequence is MYKLMIFDFIIILAVTLFVDF. Residues 516–555 are Extracellular-facing; it reads PRKLLVTYCSSWKLIQCWGQQEFAIPDNVLGIVYGQTICW. A helical membrane pass occupies residues 556–576; the sequence is IGAFFSPLLPAIATLKFIIIF. The Cytoplasmic segment spans residues 577 to 601; it reads YVKEWSLLYTCRPSPRPFRASNSNF. Residues 602–622 form a helical membrane-spanning segment; that stretch reads FFLLVLLIGLCLAIIPLTISI. The Extracellular segment spans residues 623-665; sequence SRIPSSKACGPFTNFNTTWEVIPKTVSTFPSSLQSFIHGVTSE. A glycan (N-linked (GlcNAc...) asparagine) is linked at N638. The helical transmembrane segment at 666 to 686 threads the bilayer; it reads AFAVPFFMIICLIMFYFIALA. Topologically, residues 687–723 are cytoplasmic; the sequence is GAHKRVVIQLREQLSLESRDKRYLIQKLTEAQRDTRN.

It belongs to the TMC family. As to quaternary structure, interacts with PIEZO2; the interaction inhibits PIEZO2-conducted mechanically activated currents.

It localises to the membrane. In terms of biological role, acts as an inhibitory modulator of PIEZO2 mechanosensitive channel in dorsal root ganglion (DRG) neurons through physical interactions or interference with the interaction between Piezo2 and the cytoskeleton. The chain is Transmembrane channel-like protein 7 (TMC7) from Macaca fascicularis (Crab-eating macaque).